The sequence spans 122 residues: Basic phospholipase A2 Cdr-13 (122 aa).

Intrachain disulfides connect Cys-26/Cys-115, Cys-28/Cys-44, Cys-43/Cys-95, Cys-49/Cys-122, Cys-50/Cys-88, Cys-57/Cys-81, and Cys-75/Cys-86. Residues Tyr-27, Gly-29, and Gly-31 each contribute to the Ca(2+) site. Residue His-47 is part of the active site. Asp-48 provides a ligand contact to Ca(2+). Residue Asp-89 is part of the active site.

Requires Ca(2+) as cofactor. In terms of tissue distribution, expressed by the venom gland.

The protein localises to the secreted. The enzyme catalyses a 1,2-diacyl-sn-glycero-3-phosphocholine + H2O = a 1-acyl-sn-glycero-3-phosphocholine + a fatty acid + H(+). Its function is as follows. Snake venom phospholipase A2 (PLA2) that induces myonecrosis and edema upon subcutaneous injections in mice. In vitro, causes a potent blockade of neuromuscular transmission in young chicken biventer cervicis preparation and produces cytotoxicity in murine C2C12 skeletal muscle myotubes and lack cytolytic activity upon myoblasts in vitro. PLA2 catalyzes the calcium-dependent hydrolysis of the 2-acyl groups in 3-sn-phosphoglycerides. The sequence is that of Basic phospholipase A2 Cdr-13 from Crotalus durissus ruruima (South American rattlesnake).